The following is a 299-amino-acid chain: MSSYPPHVIVLIGATASGKTELAIEIAEYFKTRIHNIDSRQIYKSMDIGTAKPSENQQKKIKHFLIDIEEPINPINVKQFQEIAQKSIQKEIKQNNLPLLVGGSGLYMNAITKGFFVPDVPPQNNLREQLEELGQKECWELLKNCDPISAKKINLADQIRTIRALEVFYVTGKPLSSQKVQKPPQWKILELGLNRDNLKERISRRTKNMFLSGIIEETKNLISRYGSDLPILETIGYREAKDVLNNNLPIDKAIELTNIKTNQFAKRQKTWFRNKNNPIWLNNKNLLKDAIIKIESFLD.

13 to 20 contacts ATP; sequence GATASGKT. 15 to 20 contacts substrate; sequence TASGKT. The tract at residues 38-41 is interaction with substrate tRNA; that stretch reads DSRQ.

Belongs to the IPP transferase family. Monomer. It depends on Mg(2+) as a cofactor.

The catalysed reaction is adenosine(37) in tRNA + dimethylallyl diphosphate = N(6)-dimethylallyladenosine(37) in tRNA + diphosphate. Functionally, catalyzes the transfer of a dimethylallyl group onto the adenine at position 37 in tRNAs that read codons beginning with uridine, leading to the formation of N6-(dimethylallyl)adenosine (i(6)A). This Prochlorococcus marinus (strain MIT 9312) protein is tRNA dimethylallyltransferase.